A 494-amino-acid chain; its full sequence is Probable cobyric acid synthase (494 aa).

The GATase cobBQ-type domain maps to 249–447 (SVRIAVIRLP…LHGIFFNRRF (199 aa)). C331 (nucleophile) is an active-site residue. H439 is an active-site residue.

Belongs to the CobB/CobQ family. CobQ subfamily.

The protein operates within cofactor biosynthesis; adenosylcobalamin biosynthesis. In terms of biological role, catalyzes amidations at positions B, D, E, and G on adenosylcobyrinic A,C-diamide. NH(2) groups are provided by glutamine, and one molecule of ATP is hydrogenolyzed for each amidation. The chain is Probable cobyric acid synthase from Methanopyrus kandleri (strain AV19 / DSM 6324 / JCM 9639 / NBRC 100938).